Consider the following 296-residue polypeptide: Protoheme IX farnesyltransferase 2 (296 aa).

Helical transmembrane passes span 7–27 (LLVAKPGIIFGNLIAVAGGYF), 36–56 (PMLLLATVIGLSLVVASGCVL), 83–103 (LKAALAHGLVLGVAGFGLLWW), 108–128 (LTTALAGFGYFVYVGLYSLWF), 134–154 (YGTLVGSLSGAMPPVVGYCAV), 163–183 (ASLLAIFCLWQMPHSYAIAIF), 207–227 (IHIVLYILAFMAATLALCLGG), 229–249 (AGYGYLLVAVAVSLWWLAIAL), and 265–285 (FAFSIVAITALSVMMSIDFQV).

Belongs to the UbiA prenyltransferase family. Protoheme IX farnesyltransferase subfamily.

It localises to the cell inner membrane. It carries out the reaction heme b + (2E,6E)-farnesyl diphosphate + H2O = Fe(II)-heme o + diphosphate. The protein operates within porphyrin-containing compound metabolism; heme O biosynthesis; heme O from protoheme: step 1/1. In terms of biological role, converts heme B (protoheme IX) to heme O by substitution of the vinyl group on carbon 2 of heme B porphyrin ring with a hydroxyethyl farnesyl side group. The polypeptide is Protoheme IX farnesyltransferase 2 (Pseudomonas aeruginosa (strain UCBPP-PA14)).